A 127-amino-acid polypeptide reads, in one-letter code: CST complex subunit TEN1 (127 aa).

This sequence belongs to the TEN1 family. As to quaternary structure, component of the CST complex, composed of CTC1, TEN1 and STN1. Interacts with STN1. No interaction with POT1A, but competes with it for STN1 binding. As to expression, ubiquitous. High expression in meristematic tissues and in vasculature.

It localises to the nucleus. The protein resides in the chromosome. The protein localises to the telomere. Its function is as follows. Required for the maintenance of meristems and stem cells through the reduction of DNA damage. Promotes telomere integrity by maintaining telomere length and proper architecture of the chromosome terminus. Negatively regulates telomerase repeat addition processivity. Hampers contacts between enzymatically active telomerase and CST complex. This Arabidopsis thaliana (Mouse-ear cress) protein is CST complex subunit TEN1.